A 250-amino-acid polypeptide reads, in one-letter code: Hydroxyethylthiazole kinase (250 aa).

Met-39 serves as a coordination point for substrate. ATP-binding residues include Arg-114 and Thr-159. Gly-186 is a substrate binding site.

Belongs to the Thz kinase family. Mg(2+) is required as a cofactor.

The catalysed reaction is 5-(2-hydroxyethyl)-4-methylthiazole + ATP = 4-methyl-5-(2-phosphooxyethyl)-thiazole + ADP + H(+). Its pathway is cofactor biosynthesis; thiamine diphosphate biosynthesis; 4-methyl-5-(2-phosphoethyl)-thiazole from 5-(2-hydroxyethyl)-4-methylthiazole: step 1/1. Catalyzes the phosphorylation of the hydroxyl group of 4-methyl-5-beta-hydroxyethylthiazole (THZ). The sequence is that of Hydroxyethylthiazole kinase from Lactococcus lactis subsp. cremoris (strain SK11).